The following is a 433-amino-acid chain: Urokinase-type plasminogen activator (433 aa).

An N-terminal signal peptide occupies residues 1–20 (MRALLAHLLLCVLVVSASKG). The region spanning 26-62 (VPSDCGCLNGGTCMSNKYFSSIHWCNCPKKFGGQHCE) is the EGF-like domain. Intrachain disulfides connect Cys30–Cys38, Cys32–Cys50, Cys52–Cys61, Cys69–Cys150, Cys90–Cys132, and Cys121–Cys145. The tract at residues 33–56 (LNGGTCMSNKYFSSIHWCNCPKKF) is binds urokinase plasminogen activator surface receptor. One can recognise a Kringle domain in the interval 69-150 (CYEGNGHFYR…RVQECMVHNC (82 aa)). Residues 151-177 (ADGKKPSSPPEELQFQCGQRTLRPRFK) form a connecting peptide region. The residue at position 157 (Ser157) is a Phosphoserine. 6 disulfide bridges follow: Cys167-Cys298, Cys208-Cys224, Cys216-Cys287, Cys315-Cys384, Cys347-Cys363, and Cys374-Cys402. The Peptidase S1 domain maps to 178–426 (IVGGEFTTIE…FLPWIHSHTR (249 aa)). Catalysis depends on charge relay system residues His223 and Asp274. The N-linked (GlcNAc...) asparagine glycan is linked to Asn324. The residue at position 325 (Ser325) is a Phosphoserine. Ser378 (charge relay system) is an active-site residue.

This sequence belongs to the peptidase S1 family. Found in high and low molecular mass forms. Each consists of two chains, A and B. The high molecular mass form contains a long chain A which is cleaved to yield a short chain A. Forms heterodimer with SERPINA5. Binds LRP1B; binding is followed by internalization and degradation. Interacts with MRC2. Interacts with PLAUR. In complex with SERPINE1, interacts with PLAUR/uPAR. Interacts with SORL1 and LRP1, either alone or in complex with SERPINE1; these interactions are abolished in the presence of LRPAP1/RAP. The ternary complex composed of PLAUR-PLAU-PAI1 also interacts with SORLA. Post-translationally, phosphorylation of Ser-157 and Ser-325 abolishes proadhesive ability but does not interfere with receptor binding. In terms of processing, produced as an inactive single-chain protein (pro-uPA or sc-uPA), is processed into the active disulfide-linked two-chain form of PLAU/uPA by a proteolytic event mediated, at least, by TMPRSS4.

Its subcellular location is the secreted. The enzyme catalyses Specific cleavage of Arg-|-Val bond in plasminogen to form plasmin.. Its activity is regulated as follows. Inhibited by SERPINA5. Inhibited by SERPINE1. In terms of biological role, specifically cleaves the zymogen plasminogen to form the active enzyme plasmin. The protein is Urokinase-type plasminogen activator (PLAU) of Papio cynocephalus (Yellow baboon).